The chain runs to 153 residues: Ribosomal RNA large subunit methyltransferase H (153 aa).

Residues L75, G102, and 121–126 (LSKLTL) each bind S-adenosyl-L-methionine.

This sequence belongs to the RNA methyltransferase RlmH family. In terms of assembly, homodimer.

The protein localises to the cytoplasm. It catalyses the reaction pseudouridine(1915) in 23S rRNA + S-adenosyl-L-methionine = N(3)-methylpseudouridine(1915) in 23S rRNA + S-adenosyl-L-homocysteine + H(+). In terms of biological role, specifically methylates the pseudouridine at position 1915 (m3Psi1915) in 23S rRNA. The polypeptide is Ribosomal RNA large subunit methyltransferase H (Campylobacter jejuni (strain RM1221)).